Here is a 251-residue protein sequence, read N- to C-terminus: DNA repair protein RecO (251 aa).

It belongs to the RecO family.

Functionally, involved in DNA repair and RecF pathway recombination. In Acidiphilium cryptum (strain JF-5), this protein is DNA repair protein RecO.